The primary structure comprises 1329 residues: Synergin gamma (1329 aa).

A coiled-coil region spans residues 112-152; it reads MQKQFAEEQQKRFEQQQKLLEEERKRRQFEEQKQKLRLLSS. The disordered stretch occupies residues 175–211; it reads GFSRDAKMHPTPASHPKKPDCPTSSHSTKTVSPSSAF. Positions 197 to 209 are enriched in low complexity; sequence TSSHSTKTVSPSS. Residues 393–504 form the EH domain; sequence NESLVPDAYK…TPVSQPTAMT (112 aa). A DFXDF motif 1 motif is present at residues 555–559; it reads DFQDF. Serine 571 is subject to Phosphoserine. The span at 578 to 594 shows a compositional bias: polar residues; the sequence is VPASSKTSNSQHGNSAP. Residues 578 to 600 are disordered; it reads VPASSKTSNSQHGNSAPSLLIPL. Lysine 609 carries the post-translational modification N6-acetyllysine. The segment at 614-878 is interaction with AP1G1; that stretch reads KGISAEKPSE…ADFHSSKFSS (265 aa). Disordered stretches follow at residues 661–701 and 730–753; these read GTDD…TQTQ and AFST…PASL. At serine 676 the chain carries Phosphoserine. Residues 761–773 form an interaction with AP1G1, AP1G2 and GGA1 region; the sequence is LADDFGEFNLFGE. Residues 785 to 789 carry the DFXDF motif 2 motif; that stretch reads DFADF. A disordered region spans residues 797-835; it reads IPSEPKADDKYEALREEGSPGALSTSTVEGAHNPPVSSS. Over residues 801–814 the composition is skewed to basic and acidic residues; sequence PKADDKYEALREEG. Phosphoserine is present on serine 815. Residue lysine 836 is modified to N6-acetyllysine. Residues serine 844 and serine 864 each carry the phosphoserine modification. Disordered stretches follow at residues 856-922, 941-1042, and 1088-1113; these read KENT…DSED, HVMS…FGEF, and SLSL…RDRS. The segment covering 864 to 873 has biased composition (basic and acidic residues); the sequence is SDGDFADFHS. The DFXDF motif 3 signature appears at 867 to 871; the sequence is DFADF. Low complexity predominate over residues 874–883; it reads SKFSSTSSDK. Residues serine 904, serine 944, serine 947, serine 997, serine 1021, serine 1088, serine 1090, serine 1102, and serine 1113 each carry the phosphoserine modification. The segment covering 944–955 has biased composition (polar residues); that stretch reads SDSSLDLPTVSG. The segment covering 1016 to 1028 has biased composition (polar residues); that stretch reads ENTCPSPASSVAS. Threonine 1115 is subject to Phosphothreonine.

In terms of assembly, self-associates. Interacts with GGA1 (via GAE domain). Interacts with GGA2 and GGA3. Interacts with AP1G1 (via GAE domain), a subunit of adapter protein complex AP-1. Interacts with AP1G2 (via GAE domain) a subunit of adapter protein complex AP-1. Component of the aftiphilin/p200/gamma-synergin complex, at least composed of AFTPH/aftiphilin, HEATR5B/p200a and SYNRG/gamma-synergin, which plays a role in the AP1G1/AP-1-mediated trafficking of transferrin from early to recycling endosomes. Within the complex interacts with AFTPH/aftiphilin and HEATR5B/p200a; the interactions are direct. Interacts (via EH domain) with SCAMP1. As to expression, detected in brain and liver (at protein level). Ubiquitously expressed.

The protein resides in the cytoplasm. It localises to the golgi apparatus. Its subcellular location is the trans-Golgi network membrane. It is found in the perinuclear region. The protein localises to the cytoplasmic vesicle. The protein resides in the clathrin-coated vesicle. Plays a role in endocytosis and/or membrane trafficking at the trans-Golgi network (TGN). May act by linking the adapter protein complex AP-1 to other proteins. Component of clathrin-coated vesicles. Component of the aftiphilin/p200/gamma-synergin complex, which plays roles in AP1G1/AP-1-mediated protein trafficking including the trafficking of transferrin from early to recycling endosomes, and the membrane trafficking of furin and the lysosomal enzyme cathepsin D between the trans-Golgi network (TGN) and endosomes. This is Synergin gamma (Synrg) from Rattus norvegicus (Rat).